The primary structure comprises 454 residues: GA-binding protein alpha chain (454 aa).

The 84-residue stretch at 168–251 (AALEGYRKEQ…SHLELLRKYV (84 aa)) folds into the PNT domain. A disordered region spans residues 295–316 (KVQRSPRISGEDRSSPGNRTGN). S303 bears the Phosphoserine mark. A DNA-binding region (ETS) is located at residues 320–400 (IQLWQFLLEL…QGKRFVYKFV (81 aa)).

This sequence belongs to the ETS family. In terms of assembly, heterotetramer of two alpha and two beta subunits. Ubiquitous.

The protein localises to the nucleus. Transcription factor capable of interacting with purine rich repeats (GA repeats). Positively regulates transcription of transcriptional repressor Rhit/Zpf13. This is GA-binding protein alpha chain (Gabpa) from Mus musculus (Mouse).